The primary structure comprises 1379 residues: Partitioning defective protein 3 (1379 aa).

Residues 1-23 (MSASSTSSSSTSCPEGGEPSGSC) show a composition bias toward low complexity. Disordered regions lie at residues 1-32 (MSASSTSSSSTSCPEGGEPSGSCKSSDEGEST) and 208-335 (YNVG…SDRK). 2 stretches are compositionally biased toward polar residues: residues 239–256 (SFDQIPQSGLRVSTPKPS) and 272–284 (ILRSSLRTEASGS). Composition is skewed to basic and acidic residues over residues 302-315 (EVEKKLAEQDERKS) and 322-335 (DKNPGRFARGSDRK). PDZ domains lie at 381 to 483 (LVTF…IINR) and 515 to 599 (VVEL…SRVS). Residues 606-626 (TSASSENKENEETLKVVEEEK) are a coiled coil. In terms of domain architecture, PDZ 3 spans 659–750 (VIPFINGSSS…EVGMISSNVR (92 aa)). Disordered stretches follow at residues 767 to 873 (DLSR…MGAA), 887 to 918 (HQRQNSAPTSSTQKRSKSQPRSSSQRNYRSPM), 949 to 1085 (QSME…GGNV), 1273 to 1301 (VEPVSGSSASATDRRGRSTSSGAVASGSS), and 1350 to 1379 (AYETRGGGAGGSPSQYRRRDQGPPHRFPQY). Low complexity-rich tracts occupy residues 776 to 786 (SSPSPSSRMSS) and 798 to 826 (ATRGTSSSGADSSHSRQSSASSAVPAVPA). Basic and acidic residues-rich tracts occupy residues 828–844 (LTERDSIVSDGTSRNDE) and 854–869 (FNREGLGRKSLSEKRG). Positions 894-912 (PTSSTQKRSKSQPRSSSQR) are enriched in low complexity. Positions 967-977 (QIPTGSSSKVQ) are enriched in polar residues. 2 stretches are compositionally biased toward basic and acidic residues: residues 1030 to 1040 (KSRDASPEKTP) and 1048 to 1060 (SVERPKSIIDERN). The segment covering 1290–1301 (STSSGAVASGSS) has biased composition (low complexity).

This sequence belongs to the PAR3 family. In terms of assembly, required, together with pkc-3, for the localization of par-6; par-6 is involved in localizing/maintaining par-3 at the cell periphery. Interacts with par-6 and pkc-3 for localization at the periphery of anterior cortex of the embryo. As to expression, asymmetrically distributed at the periphery of the zygote and in dividing blastomeres of the germline lineage. Coexpressed with par-6; patchy expression observed at the periphery after completion of meiosis I and in meiosis II. On completion of metaphase II, expression is restricted to the anterior 85% of embryo length; this decreases to 55% in embryos between prophase and telophase of the first mitosis. During the first cleavage, expression is detected in the advancing furrow. Transiently coexpressed and colocalized asymmetrically with par-6 and pkc-3, in the developing somatic gonad, including the spermathecal precursor cells of L4 larvae.

It localises to the cytoplasm. In terms of biological role, in cooperation with pkc-3, required for establishing cell polarity and regulating spindle orientation in the early embryo. Localization is crucial for recruiting par-6 and pkc-3 to the peripheral apical cortex and restricting par-2 to basolateral surfaces. Necessary for apicobasal and anterior-posterior asymmetries associated with cell adhesion and gastrulation during the first few cycles of embryogenesis, and also for epithelial cell polarity in the distal spermatheca. Regulates the asymmetric localization of csnk-1, ppk-1 and gpr-1/2 during the first embryonic division. The polypeptide is Partitioning defective protein 3 (Caenorhabditis elegans).